The following is a 61-amino-acid chain: Small ribosomal subunit protein uS14 (61 aa).

Zn(2+) is bound by residues C24, C27, C40, and C43.

Belongs to the universal ribosomal protein uS14 family. Zinc-binding uS14 subfamily. In terms of assembly, part of the 30S ribosomal subunit. Contacts proteins S3 and S10. It depends on Zn(2+) as a cofactor.

Functionally, binds 16S rRNA, required for the assembly of 30S particles and may also be responsible for determining the conformation of the 16S rRNA at the A site. The chain is Small ribosomal subunit protein uS14 from Geotalea daltonii (strain DSM 22248 / JCM 15807 / FRC-32) (Geobacter daltonii).